Consider the following 283-residue polypeptide: Serine/threonine-protein phosphatase Pgam5, mitochondrial (283 aa).

Residues 7–23 (MYGLPSAAVAVGTALLN) traverse the membrane as a helical segment.

Belongs to the phosphoglycerate mutase family. BPG-dependent PGAM subfamily. In terms of assembly, interacts with skn-1.

Its subcellular location is the mitochondrion outer membrane. The catalysed reaction is O-phospho-L-seryl-[protein] + H2O = L-seryl-[protein] + phosphate. It catalyses the reaction O-phospho-L-threonyl-[protein] + H2O = L-threonyl-[protein] + phosphate. In terms of biological role, displays phosphatase activity for serine/threonine residues. Has apparently no phosphoglycerate mutase activity. This chain is Serine/threonine-protein phosphatase Pgam5, mitochondrial (pgam-5), found in Caenorhabditis briggsae.